The chain runs to 200 residues: HTH-type transcriptional repressor KstR2 (200 aa).

The 61-residue stretch at 9–69 (NSRRGELLEL…ELLRGFLDWL (61 aa)) folds into the HTH tetR-type domain. Residues 32-51 (TVRDIADGAGILSGSLYHHF) constitute a DNA-binding region (H-T-H motif).

In terms of assembly, homodimer.

Controls the expression of a small regulon that may play a role in the utilization of cholesterol. The protein is HTH-type transcriptional repressor KstR2 (kstR2) of Mycobacterium tuberculosis (strain CDC 1551 / Oshkosh).